Reading from the N-terminus, the 1272-residue chain is CST complex subunit CTC1 (1272 aa).

It belongs to the CTC1 family. Component of the CST complex, composed of CTC1, TEN1 and STN1. Interacts with POT1A.

It is found in the nucleus. Its subcellular location is the chromosome. The protein resides in the telomere. Component of the CST complex, a complex that binds to single-stranded DNA and is required to protect telomeres from DNA degradation. The CST complex binds single-stranded DNA with high affinity in a sequence-independent manner, while isolated subunits bind DNA with low affinity by themselves. Associates with enzymatically active telomerase. This Arabidopsis thaliana (Mouse-ear cress) protein is CST complex subunit CTC1.